The sequence spans 406 residues: Imidazolonepropionase (406 aa).

2 residues coordinate Fe(3+): H72 and H74. Zn(2+) is bound by residues H72 and H74. 4-imidazolone-5-propanoate is bound by residues R81, Y144, and H177. Y144 serves as a coordination point for N-formimidoyl-L-glutamate. Fe(3+) is bound at residue H242. A Zn(2+)-binding site is contributed by H242. Position 245 (Q245) interacts with 4-imidazolone-5-propanoate. Residue D317 participates in Fe(3+) binding. D317 lines the Zn(2+) pocket. N319 and G321 together coordinate N-formimidoyl-L-glutamate. Residue T322 participates in 4-imidazolone-5-propanoate binding.

This sequence belongs to the metallo-dependent hydrolases superfamily. HutI family. Zn(2+) is required as a cofactor. It depends on Fe(3+) as a cofactor.

The protein localises to the cytoplasm. It catalyses the reaction 4-imidazolone-5-propanoate + H2O = N-formimidoyl-L-glutamate. It participates in amino-acid degradation; L-histidine degradation into L-glutamate; N-formimidoyl-L-glutamate from L-histidine: step 3/3. Its function is as follows. Catalyzes the hydrolytic cleavage of the carbon-nitrogen bond in imidazolone-5-propanoate to yield N-formimidoyl-L-glutamate. It is the third step in the universal histidine degradation pathway. This chain is Imidazolonepropionase, found in Yersinia pestis bv. Antiqua (strain Antiqua).